Consider the following 504-residue polypeptide: Maturase K (504 aa).

It belongs to the intron maturase 2 family. MatK subfamily.

The protein localises to the plastid. The protein resides in the chloroplast. Its function is as follows. Usually encoded in the trnK tRNA gene intron. Probably assists in splicing its own and other chloroplast group II introns. The chain is Maturase K from Vauquelinia californica (Arizona rosewood).